The primary structure comprises 265 residues: 2-C-methyl-D-erythritol 4-phosphate cytidylyltransferase (265 aa).

Positions 231-241 (DRGGASREAER) are enriched in basic and acidic residues. Residues 231–265 (DRGGASREAERSAMPSAATSVFSGARSAASGSEEV) are disordered. Low complexity predominate over residues 253–265 (SGARSAASGSEEV).

Belongs to the IspD/TarI cytidylyltransferase family. IspD subfamily.

It carries out the reaction 2-C-methyl-D-erythritol 4-phosphate + CTP + H(+) = 4-CDP-2-C-methyl-D-erythritol + diphosphate. It functions in the pathway isoprenoid biosynthesis; isopentenyl diphosphate biosynthesis via DXP pathway; isopentenyl diphosphate from 1-deoxy-D-xylulose 5-phosphate: step 2/6. In terms of biological role, catalyzes the formation of 4-diphosphocytidyl-2-C-methyl-D-erythritol from CTP and 2-C-methyl-D-erythritol 4-phosphate (MEP). The sequence is that of 2-C-methyl-D-erythritol 4-phosphate cytidylyltransferase from Xanthomonas campestris pv. campestris (strain 8004).